Consider the following 652-residue polypeptide: DNA ligase (652 aa).

NAD(+) contacts are provided by residues 29-33, 78-79, and glutamate 107; these read DSEYD and SL. The N6-AMP-lysine intermediate role is filled by lysine 109. Positions 130, 164, 278, and 302 each coordinate NAD(+). 4 residues coordinate Zn(2+): cysteine 395, cysteine 398, cysteine 413, and cysteine 418. The BRCT domain occupies 577–652; sequence VADAALSGLT…VRDEAWLESL (76 aa).

The protein belongs to the NAD-dependent DNA ligase family. LigA subfamily. It depends on Mg(2+) as a cofactor. Mn(2+) is required as a cofactor.

The catalysed reaction is NAD(+) + (deoxyribonucleotide)n-3'-hydroxyl + 5'-phospho-(deoxyribonucleotide)m = (deoxyribonucleotide)n+m + AMP + beta-nicotinamide D-nucleotide.. DNA ligase that catalyzes the formation of phosphodiester linkages between 5'-phosphoryl and 3'-hydroxyl groups in double-stranded DNA using NAD as a coenzyme and as the energy source for the reaction. It is essential for DNA replication and repair of damaged DNA. The chain is DNA ligase from Streptococcus pneumoniae (strain CGSP14).